Here is a 117-residue protein sequence, read N- to C-terminus: Small ribosomal subunit protein bS6 (117 aa).

Belongs to the bacterial ribosomal protein bS6 family.

Functionally, binds together with bS18 to 16S ribosomal RNA. This Porphyromonas gingivalis (strain ATCC BAA-308 / W83) protein is Small ribosomal subunit protein bS6.